A 494-amino-acid polypeptide reads, in one-letter code: MKKQAFSSEQYLNLQRDHILERINQFDGKLYLEFGGKMLEDFHAARVLPGYEPDNKIKLLQEFKDQVEVVIAINASNIEHSKARGDLGISYDQEVLRLIDKFNELNIYVGSVVITQYSGQPAADAFRNQLEKNGITSYIHYPIKGYPTDINHIISPEGMGKNDYIKTSRNLIVVTAPGPGSGKLATCLSNMYHDQINGIKSGYAKFETFPVWNLPLHHPVNLAYEAATADLDDVNMIDPFHLETYGKTTVNYNRDIEIFPVLKRMLERILGESPYASPTDMGVNMVGFAITDDEAAKEASKQEIIRRYYQTVLDFKNERVPETAVKKIELLMNDLGITPEDRQVVVAARAKAEETGGSALALELPNGQIVTGKNSELFGPTAAALINAIKTSAGIDKDTRLIEPEVVKPIQDLKIDHLGSRNPRLHSNEILIALAITAANNADAARAMKELSNLKGSEAHSTIILTDEDKNVLRKLGINVTFDPYYQYDKLYRK.

The protein belongs to the UPF0371 family.

In Streptococcus thermophilus (strain ATCC BAA-250 / LMG 18311), this protein is UPF0371 protein stu1377.